A 293-amino-acid polypeptide reads, in one-letter code: Foldase protein PrsA 2 (293 aa).

The signal sequence occupies residues 1–20 (MKKKLILGLVMMMALFSLAA). Cys-21 carries N-palmitoyl cysteine lipidation. A lipid anchor (S-diacylglycerol cysteine) is attached at Cys-21. Residues 135 to 226 (QPDITVSHIL…YGYHIIQMDK (92 aa)) form the PpiC domain.

It belongs to the PrsA family.

The protein localises to the cell membrane. The catalysed reaction is [protein]-peptidylproline (omega=180) = [protein]-peptidylproline (omega=0). Its function is as follows. Plays a major role in protein secretion by helping the post-translocational extracellular folding of several secreted proteins. This chain is Foldase protein PrsA 2, found in Listeria monocytogenes serotype 4b (strain F2365).